A 416-amino-acid chain; its full sequence is Serine hydroxymethyltransferase (416 aa).

Residues Leu121 and Gly125–Leu127 each bind (6S)-5,6,7,8-tetrahydrofolate. Lys229 carries the post-translational modification N6-(pyridoxal phosphate)lysine.

The protein belongs to the SHMT family. Homodimer. Requires pyridoxal 5'-phosphate as cofactor.

Its subcellular location is the cytoplasm. The enzyme catalyses (6R)-5,10-methylene-5,6,7,8-tetrahydrofolate + glycine + H2O = (6S)-5,6,7,8-tetrahydrofolate + L-serine. The protein operates within one-carbon metabolism; tetrahydrofolate interconversion. It functions in the pathway amino-acid biosynthesis; glycine biosynthesis; glycine from L-serine: step 1/1. In terms of biological role, catalyzes the reversible interconversion of serine and glycine with tetrahydrofolate (THF) serving as the one-carbon carrier. This reaction serves as the major source of one-carbon groups required for the biosynthesis of purines, thymidylate, methionine, and other important biomolecules. Also exhibits THF-independent aldolase activity toward beta-hydroxyamino acids, producing glycine and aldehydes, via a retro-aldol mechanism. This Neisseria gonorrhoeae (strain ATCC 700825 / FA 1090) protein is Serine hydroxymethyltransferase.